A 639-amino-acid chain; its full sequence is ATP-dependent zinc metalloprotease FtsH (639 aa).

Residues 1–20 (MNGNNNMNNNGKSNNKKKNK) lie on the Cytoplasmic side of the membrane. The helical transmembrane segment at 21–41 (NWILGLVVVFLISAIFMSYFI) threads the bilayer. The Periplasmic segment spans residues 42–120 (RGGESYKNVP…LSSGKSQASL (79 aa)). A helical membrane pass occupies residues 121–141 (IGVLLQTLPWILFFIFFFFIF). The Cytoplasmic portion of the chain corresponds to 142-639 (RQTQGGGGKV…KEVKGEDVKG (498 aa)). An ATP-binding site is contributed by 212–219 (GSPGTGKT). Residue histidine 434 participates in Zn(2+) binding. Residue glutamate 435 is part of the active site. Zn(2+) contacts are provided by histidine 438 and aspartate 510.

It in the central section; belongs to the AAA ATPase family. This sequence in the C-terminal section; belongs to the peptidase M41 family. As to quaternary structure, homohexamer. Zn(2+) serves as cofactor.

Its subcellular location is the cell inner membrane. Functionally, acts as a processive, ATP-dependent zinc metallopeptidase for both cytoplasmic and membrane proteins. Plays a role in the quality control of integral membrane proteins. This chain is ATP-dependent zinc metalloprotease FtsH, found in Borreliella burgdorferi (strain ZS7) (Borrelia burgdorferi).